Here is a 473-residue protein sequence, read N- to C-terminus: Glutamate--tRNA ligase (473 aa).

Residues 11–21 (PSPTGFLHIGG) carry the 'HIGH' region motif. The 'KMSKS' region motif lies at 240–244 (KLSKR). Lysine 243 is a binding site for ATP.

It belongs to the class-I aminoacyl-tRNA synthetase family. Glutamate--tRNA ligase type 1 subfamily. Monomer.

Its subcellular location is the cytoplasm. The enzyme catalyses tRNA(Glu) + L-glutamate + ATP = L-glutamyl-tRNA(Glu) + AMP + diphosphate. Catalyzes the attachment of glutamate to tRNA(Glu) in a two-step reaction: glutamate is first activated by ATP to form Glu-AMP and then transferred to the acceptor end of tRNA(Glu). The polypeptide is Glutamate--tRNA ligase (Rhodopseudomonas palustris (strain BisB5)).